Here is a 122-residue protein sequence, read N- to C-terminus: Large ribosomal subunit protein uL22 (122 aa).

Belongs to the universal ribosomal protein uL22 family. In terms of assembly, part of the 50S ribosomal subunit.

Its function is as follows. This protein binds specifically to 23S rRNA; its binding is stimulated by other ribosomal proteins, e.g. L4, L17, and L20. It is important during the early stages of 50S assembly. It makes multiple contacts with different domains of the 23S rRNA in the assembled 50S subunit and ribosome. In terms of biological role, the globular domain of the protein is located near the polypeptide exit tunnel on the outside of the subunit, while an extended beta-hairpin is found that lines the wall of the exit tunnel in the center of the 70S ribosome. The protein is Large ribosomal subunit protein uL22 of Prochlorococcus marinus (strain MIT 9303).